Reading from the N-terminus, the 31-residue chain is Superoxide dismutase [Cu-Zn] (31 aa).

It belongs to the Cu-Zn superoxide dismutase family. Cu cation serves as cofactor. It depends on Zn(2+) as a cofactor.

The protein localises to the cytoplasm. It catalyses the reaction 2 superoxide + 2 H(+) = H2O2 + O2. Destroys radicals which are normally produced within the cells and which are toxic to biological systems. The sequence is that of Superoxide dismutase [Cu-Zn] from Striga hermonthica (Purple witchweed).